The sequence spans 227 residues: Cytochrome c oxidase subunit 2 (227 aa).

The Mitochondrial intermembrane segment spans residues 1-14; that stretch reads MAYPFQLGLQDATS. A helical transmembrane segment spans residues 15-45; sequence PIMEELLHFHDHTLMIVFLISSLVLYIISLM. Topologically, residues 46-59 are mitochondrial matrix; it reads LTTKLTHTSTMDAQ. The helical transmembrane segment at 60-87 threads the bilayer; sequence EVETVWTILPAIILILIALPSLRILYMM. The Mitochondrial intermembrane portion of the chain corresponds to 88-227; the sequence is DEINNPSLTV…YFEAWSALMV (140 aa). Cu cation-binding residues include H161, C196, E198, C200, H204, and M207. E198 lines the Mg(2+) pocket. A Phosphotyrosine modification is found at Y218.

This sequence belongs to the cytochrome c oxidase subunit 2 family. As to quaternary structure, component of the cytochrome c oxidase (complex IV, CIV), a multisubunit enzyme composed of 14 subunits. The complex is composed of a catalytic core of 3 subunits MT-CO1, MT-CO2 and MT-CO3, encoded in the mitochondrial DNA, and 11 supernumerary subunits COX4I, COX5A, COX5B, COX6A, COX6B, COX6C, COX7A, COX7B, COX7C, COX8 and NDUFA4, which are encoded in the nuclear genome. The complex exists as a monomer or a dimer and forms supercomplexes (SCs) in the inner mitochondrial membrane with NADH-ubiquinone oxidoreductase (complex I, CI) and ubiquinol-cytochrome c oxidoreductase (cytochrome b-c1 complex, complex III, CIII), resulting in different assemblies (supercomplex SCI(1)III(2)IV(1) and megacomplex MCI(2)III(2)IV(2)). Found in a complex with TMEM177, COA6, COX18, COX20, SCO1 and SCO2. Interacts with TMEM177 in a COX20-dependent manner. Interacts with COX20. Interacts with COX16. Requires Cu cation as cofactor.

The protein resides in the mitochondrion inner membrane. It carries out the reaction 4 Fe(II)-[cytochrome c] + O2 + 8 H(+)(in) = 4 Fe(III)-[cytochrome c] + 2 H2O + 4 H(+)(out). Its function is as follows. Component of the cytochrome c oxidase, the last enzyme in the mitochondrial electron transport chain which drives oxidative phosphorylation. The respiratory chain contains 3 multisubunit complexes succinate dehydrogenase (complex II, CII), ubiquinol-cytochrome c oxidoreductase (cytochrome b-c1 complex, complex III, CIII) and cytochrome c oxidase (complex IV, CIV), that cooperate to transfer electrons derived from NADH and succinate to molecular oxygen, creating an electrochemical gradient over the inner membrane that drives transmembrane transport and the ATP synthase. Cytochrome c oxidase is the component of the respiratory chain that catalyzes the reduction of oxygen to water. Electrons originating from reduced cytochrome c in the intermembrane space (IMS) are transferred via the dinuclear copper A center (CU(A)) of subunit 2 and heme A of subunit 1 to the active site in subunit 1, a binuclear center (BNC) formed by heme A3 and copper B (CU(B)). The BNC reduces molecular oxygen to 2 water molecules using 4 electrons from cytochrome c in the IMS and 4 protons from the mitochondrial matrix. This Cuon alpinus (Dhole) protein is Cytochrome c oxidase subunit 2 (MT-CO2).